A 387-amino-acid chain; its full sequence is Guanylate kinase 1 (387 aa).

The Guanylate kinase-like domain maps to 137-319 (EKPIVISGPS…CYKKLKNLLG (183 aa)). 144 to 151 (GPSGVGKG) is an ATP binding site. Active-site residues include Arg-177, Arg-270, and Arg-281. Residues Asn-304 and Asp-305 each coordinate ATP.

This sequence belongs to the guanylate kinase family. Monomer.

It catalyses the reaction GMP + ATP = GDP + ADP. Its function is as follows. Essential for recycling GMP and indirectly, cGMP. Required for normal development of the gametophyte and embryo, in association with GK2. The sequence is that of Guanylate kinase 1 (GK-1) from Arabidopsis thaliana (Mouse-ear cress).